We begin with the raw amino-acid sequence, 353 residues long: Photosystem II protein D1 (353 aa).

T2 is modified (N-acetylthreonine). T2 is modified (phosphothreonine). The next 3 helical transmembrane spans lie at 29-46 (YIGW…TATS), 118-133 (HFLL…EWEL), and 142-156 (WIAV…AATA). Residue H118 participates in chlorophyll a binding. Y126 provides a ligand contact to pheophytin a. Residues D170 and E189 each coordinate [CaMn4O5] cluster. The chain crosses the membrane as a helical span at residues 197 to 218 (FHMLGVAGVFGGSLFSAMHGSL). H198 contacts chlorophyll a. A quinone is bound by residues H215 and 264-265 (SF). Residue H215 participates in Fe cation binding. H272 is a binding site for Fe cation. The chain crosses the membrane as a helical span at residues 274-288 (FLAAWPVVGIWFTAL). The [CaMn4O5] cluster site is built by H332, E333, D342, and A344. A propeptide spanning residues 345–353 (AVEVPSTNG) is cleaved from the precursor.

Belongs to the reaction center PufL/M/PsbA/D family. In terms of assembly, PSII is composed of 1 copy each of membrane proteins PsbA, PsbB, PsbC, PsbD, PsbE, PsbF, PsbH, PsbI, PsbJ, PsbK, PsbL, PsbM, PsbT, PsbX, PsbY, PsbZ, Psb30/Ycf12, at least 3 peripheral proteins of the oxygen-evolving complex and a large number of cofactors. It forms dimeric complexes. The D1/D2 heterodimer binds P680, chlorophylls that are the primary electron donor of PSII, and subsequent electron acceptors. It shares a non-heme iron and each subunit binds pheophytin, quinone, additional chlorophylls, carotenoids and lipids. D1 provides most of the ligands for the Mn4-Ca-O5 cluster of the oxygen-evolving complex (OEC). There is also a Cl(-1) ion associated with D1 and D2, which is required for oxygen evolution. The PSII complex binds additional chlorophylls, carotenoids and specific lipids. serves as cofactor. In terms of processing, tyr-161 forms a radical intermediate that is referred to as redox-active TyrZ, YZ or Y-Z. Post-translationally, C-terminally processed by CTPA; processing is essential to allow assembly of the oxygen-evolving complex and thus photosynthetic growth.

It is found in the plastid. The protein localises to the chloroplast thylakoid membrane. The catalysed reaction is 2 a plastoquinone + 4 hnu + 2 H2O = 2 a plastoquinol + O2. Photosystem II (PSII) is a light-driven water:plastoquinone oxidoreductase that uses light energy to abstract electrons from H(2)O, generating O(2) and a proton gradient subsequently used for ATP formation. It consists of a core antenna complex that captures photons, and an electron transfer chain that converts photonic excitation into a charge separation. The D1/D2 (PsbA/PsbD) reaction center heterodimer binds P680, the primary electron donor of PSII as well as several subsequent electron acceptors. This chain is Photosystem II protein D1, found in Calycanthus floridus var. glaucus (Eastern sweetshrub).